The chain runs to 311 residues: tRNA-cytidine(32) 2-sulfurtransferase (311 aa).

The PP-loop motif motif lies at 47-52 (SGGKDS). The [4Fe-4S] cluster site is built by cysteine 122, cysteine 125, and cysteine 213.

It belongs to the TtcA family. As to quaternary structure, homodimer. It depends on Mg(2+) as a cofactor. [4Fe-4S] cluster is required as a cofactor.

It localises to the cytoplasm. It carries out the reaction cytidine(32) in tRNA + S-sulfanyl-L-cysteinyl-[cysteine desulfurase] + AH2 + ATP = 2-thiocytidine(32) in tRNA + L-cysteinyl-[cysteine desulfurase] + A + AMP + diphosphate + H(+). The protein operates within tRNA modification. Functionally, catalyzes the ATP-dependent 2-thiolation of cytidine in position 32 of tRNA, to form 2-thiocytidine (s(2)C32). The sulfur atoms are provided by the cysteine/cysteine desulfurase (IscS) system. This chain is tRNA-cytidine(32) 2-sulfurtransferase, found in Escherichia coli O157:H7.